We begin with the raw amino-acid sequence, 476 residues long: DnaJ homolog subfamily C member 7 homolog (476 aa).

Positions 1-22 (MTEVETTHMNAGTESQQEPAEL) are disordered. Polar residues predominate over residues 7–18 (THMNAGTESQQE). 7 TPR repeats span residues 23 to 56 (AEKQ…GSDS), 59 to 92 (AIYY…KPDV), 143 to 176 (MSWM…NPKN), 177 to 210 (VEAL…DPDC), 223 to 256 (LENT…DPDN), 261 to 294 (AKLY…DSSY), and 295 to 328 (LKGL…DASD). The 66-residue stretch at 349–414 (DHYKILGVSK…ESRRRFDSGV (66 aa)) folds into the J domain.

It is found in the cytoplasm. This chain is DnaJ homolog subfamily C member 7 homolog, found in Schizosaccharomyces pombe (strain 972 / ATCC 24843) (Fission yeast).